A 62-amino-acid chain; its full sequence is MRCLPVFVILLLLIASAPSVDAQPKTKDDVPLAPLHDNIRSTLQTLRKKVCCRPVQDCCSGK.

The N-terminal stretch at 1 to 22 is a signal peptide; it reads MRCLPVFVILLLLIASAPSVDA. A propeptide spanning residues 23–49 is cleaved from the precursor; that stretch reads QPKTKDDVPLAPLHDNIRSTLQTLRKK. The residue at position 60 (Ser-60) is a Serine amide.

Belongs to the conotoxin T superfamily. Post-translationally, contains 2 disulfide bonds that can be either 'C1-C3, C2-C4' or 'C1-C4, C2-C3', since these disulfide connectivities have been observed for conotoxins with cysteine framework V (for examples, see AC P0DQQ7 and AC P81755). Expressed by the venom duct.

Its subcellular location is the secreted. The protein is Conotoxin Gm5.2 of Conus gloriamaris (Glory-of-the-Sea cone).